Here is a 475-residue protein sequence, read N- to C-terminus: Deoxyguanosinetriphosphate triphosphohydrolase-like protein (475 aa).

The region spanning 118–272 (RLTHTLEVAQ…MDLSDDIAYS (155 aa)) is the HD domain.

This sequence belongs to the dGTPase family. Type 2 subfamily.

This is Deoxyguanosinetriphosphate triphosphohydrolase-like protein (dgt) from Bifidobacterium longum (strain NCC 2705).